Consider the following 300-residue polypeptide: UDP-3-O-acyl-N-acetylglucosamine deacetylase (300 aa).

Zn(2+) contacts are provided by His-78, His-237, and Asp-241. Residue His-264 is the Proton donor of the active site.

Belongs to the LpxC family. Zn(2+) is required as a cofactor.

The enzyme catalyses a UDP-3-O-[(3R)-3-hydroxyacyl]-N-acetyl-alpha-D-glucosamine + H2O = a UDP-3-O-[(3R)-3-hydroxyacyl]-alpha-D-glucosamine + acetate. It functions in the pathway glycolipid biosynthesis; lipid IV(A) biosynthesis; lipid IV(A) from (3R)-3-hydroxytetradecanoyl-[acyl-carrier-protein] and UDP-N-acetyl-alpha-D-glucosamine: step 2/6. Its function is as follows. Catalyzes the hydrolysis of UDP-3-O-myristoyl-N-acetylglucosamine to form UDP-3-O-myristoylglucosamine and acetate, the committed step in lipid A biosynthesis. This chain is UDP-3-O-acyl-N-acetylglucosamine deacetylase, found in Acinetobacter baumannii (strain SDF).